A 475-amino-acid chain; its full sequence is Trifunctional enzyme subunit beta, mitochondrial (475 aa).

Residues 1 to 34 (MTTILTSTFRNLSTTSKWALRSSIRPLSCSSQLH) constitute a mitochondrion transit peptide. Lys53 carries the post-translational modification N6-succinyllysine. Residue Lys73 is modified to N6-acetyllysine; alternate. Lys73 carries the post-translational modification N6-succinyllysine; alternate. Cys139 serves as the catalytic Acyl-thioester intermediate. The stretch at 174 to 221 (IRHSRNMRKMMLDLNKAKTLGQRLSLLSKFRLNFLSPELPAVAEFSTN) is an intramembrane region. At Lys189 the chain carries N6-acetyllysine; alternate. The residue at position 189 (Lys189) is an N6-succinyllysine; alternate. An N6-succinyllysine mark is found at Lys191, Lys273, and Lys292. Residue Lys294 is modified to N6-acetyllysine; alternate. Lys294 is modified (N6-succinyllysine; alternate). Lys299 is subject to N6-acetyllysine. At Lys333 the chain carries N6-acetyllysine; alternate. At Lys333 the chain carries N6-succinyllysine; alternate. 2 positions are modified to N6-acetyllysine: Lys349 and Lys362. Catalysis depends on Cys459, which acts as the Proton donor/acceptor.

This sequence belongs to the thiolase-like superfamily. Thiolase family. As to quaternary structure, heterotetramer of 2 alpha/HADHA and 2 beta/HADHB subunits; forms the mitochondrial trifunctional enzyme. Also purified as higher order heterooligomers including a 4 alpha/HADHA and 4 beta/HADHB heterooligomer which physiological significance remains unclear. The mitochondrial trifunctional enzyme interacts with MTLN. Interacts with RSAD2/viperin. Acetylation of Lys-202 is observed in liver mitochondria from fasted mice but not from fed mice.

It is found in the mitochondrion. It localises to the mitochondrion inner membrane. The protein resides in the mitochondrion outer membrane. Its subcellular location is the endoplasmic reticulum. The catalysed reaction is an acyl-CoA + acetyl-CoA = a 3-oxoacyl-CoA + CoA. It carries out the reaction butanoyl-CoA + acetyl-CoA = 3-oxohexanoyl-CoA + CoA. It catalyses the reaction hexanoyl-CoA + acetyl-CoA = 3-oxooctanoyl-CoA + CoA. The enzyme catalyses octanoyl-CoA + acetyl-CoA = 3-oxodecanoyl-CoA + CoA. The catalysed reaction is decanoyl-CoA + acetyl-CoA = 3-oxododecanoyl-CoA + CoA. It carries out the reaction dodecanoyl-CoA + acetyl-CoA = 3-oxotetradecanoyl-CoA + CoA. It catalyses the reaction tetradecanoyl-CoA + acetyl-CoA = 3-oxohexadecanoyl-CoA + CoA. It functions in the pathway lipid metabolism; fatty acid beta-oxidation. Its function is as follows. Mitochondrial trifunctional enzyme catalyzes the last three of the four reactions of the mitochondrial beta-oxidation pathway. The mitochondrial beta-oxidation pathway is the major energy-producing process in tissues and is performed through four consecutive reactions breaking down fatty acids into acetyl-CoA. Among the enzymes involved in this pathway, the trifunctional enzyme exhibits specificity for long-chain fatty acids. Mitochondrial trifunctional enzyme is a heterotetrameric complex composed of two proteins, the trifunctional enzyme subunit alpha/HADHA carries the 2,3-enoyl-CoA hydratase and the 3-hydroxyacyl-CoA dehydrogenase activities, while the trifunctional enzyme subunit beta/HADHB described here bears the 3-ketoacyl-CoA thiolase activity. The chain is Trifunctional enzyme subunit beta, mitochondrial (Hadhb) from Mus musculus (Mouse).